The primary structure comprises 190 residues: Translation initiation factor IF-3 (190 aa).

This sequence belongs to the IF-3 family. As to quaternary structure, monomer.

It is found in the cytoplasm. Functionally, IF-3 binds to the 30S ribosomal subunit and shifts the equilibrium between 70S ribosomes and their 50S and 30S subunits in favor of the free subunits, thus enhancing the availability of 30S subunits on which protein synthesis initiation begins. This is Translation initiation factor IF-3 from Prochlorococcus marinus (strain MIT 9301).